Here is a 334-residue protein sequence, read N- to C-terminus: Phospho-N-acetylmuramoyl-pentapeptide-transferase (334 aa).

10 consecutive transmembrane segments (helical) span residues 2-22, 55-75, 78-98, 116-136, 154-174, 187-207, 211-231, 236-256, 262-282, and 311-331; these read IPVL…GPVV, VIFL…PGGV, GWIE…LGFM, EKLL…VFVL, GLAL…VVLA, GLAA…ALVM, WVGI…CYNF, VFMG…AAVI, FLLI…IQVI, and VVLT…AGLK.

Belongs to the glycosyltransferase 4 family. MraY subfamily. Requires Mg(2+) as cofactor.

The protein resides in the cell membrane. The catalysed reaction is UDP-N-acetyl-alpha-D-muramoyl-L-alanyl-gamma-D-glutamyl-meso-2,6-diaminopimeloyl-D-alanyl-D-alanine + di-trans,octa-cis-undecaprenyl phosphate = di-trans,octa-cis-undecaprenyl diphospho-N-acetyl-alpha-D-muramoyl-L-alanyl-D-glutamyl-meso-2,6-diaminopimeloyl-D-alanyl-D-alanine + UMP. Its pathway is cell wall biogenesis; peptidoglycan biosynthesis. Functionally, catalyzes the initial step of the lipid cycle reactions in the biosynthesis of the cell wall peptidoglycan: transfers peptidoglycan precursor phospho-MurNAc-pentapeptide from UDP-MurNAc-pentapeptide onto the lipid carrier undecaprenyl phosphate, yielding undecaprenyl-pyrophosphoryl-MurNAc-pentapeptide, known as lipid I. The chain is Phospho-N-acetylmuramoyl-pentapeptide-transferase from Desulforudis audaxviator (strain MP104C).